Here is a 1502-residue protein sequence, read N- to C-terminus: G patch domain-containing protein 8 (1502 aa).

Residues 40–86 (SDNIGHRLLQKHGWKLGQGLGKSLQGRTDPIPIVVKYDVMGMGRMEM) form the G-patch domain. Positions 89-124 (DYAEDATERRRVLEVEKEDTEELRQKYKDYVDKEKA) form a coiled coil. A C2H2-type zinc finger spans residues 136-160 (FYCELCDKQYQKHQEFDNHINSYDH). Residues 172 to 251 (REFARNVSSR…GATASCGLGS (80 aa)) are disordered. Positions 182–206 (SRKDEKKQEKALRRLHELAEQRKQA) are enriched in basic and acidic residues. The segment covering 223–233 (VDEEGGEDDKD) has biased composition (acidic residues). K311 is covalently cross-linked (Glycyl lysine isopeptide (Lys-Gly) (interchain with G-Cter in SUMO2)). 2 stretches are compositionally biased toward basic and acidic residues: residues 323 to 339 (AEEG…EKSS) and 424 to 436 (NTTH…ESKK). Disordered stretches follow at residues 323-391 (AEEG…ATEP) and 419-541 (QMDG…FPVL). Positions 459-472 (SEVSEQPKETSMTE) are enriched in polar residues. K479 is subject to N6-acetyllysine. S491 bears the Phosphoserine mark. A compositionally biased stretch (polar residues) spans 491 to 519 (SDQSLESHSQKVSETQMCESNSSKETSLA). K577 is covalently cross-linked (Glycyl lysine isopeptide (Lys-Gly) (interchain with G-Cter in SUMO2)). Composition is skewed to basic and acidic residues over residues 579-623 (SRNK…EKIV) and 653-670 (SETE…ERSG). Residues 579-1301 (SRNKDARTKG…ESTDGAEDAS (723 aa)) form a disordered region. At S653 the chain carries Phosphoserine. Basic residues predominate over residues 671 to 692 (KSHRHKKKKKHKKSSKHKRKHK). Basic and acidic residues predominate over residues 693 to 707 (ADTEEKSSKAESGEK). Basic residues predominate over residues 708-720 (SKKRKKRKRKKNK). Pro residues predominate over residues 733–743 (PEPPGSGSPAP). Phosphoserine occurs at positions 738, 740, and 758. A compositionally biased stretch (basic and acidic residues) spans 750 to 772 (AQDDSQRRSLPAEEGSSGKKDEG). 2 stretches are compositionally biased toward basic residues: residues 799–809 (AGTKRSSRSSH) and 852–867 (SRSR…RSSR). A compositionally biased stretch (low complexity) spans 868–896 (RSYSSSSDASSDQSCYSRQRSYSDDSYSD). S911 and S914 each carry phosphoserine. Basic residues predominate over residues 919–928 (SKHRSKRHKY). Residues S981, S1009, S1014, S1033, and S1035 each carry the phosphoserine modification. Basic and acidic residues predominate over residues 1010–1027 (WGHESPEERHSGRRDFIR). Residues 1042–1059 (GRGEGPGKKDDGRGDDSK) are compositionally biased toward basic and acidic residues. A Phosphoserine modification is found at S1081. Composition is skewed to basic and acidic residues over residues 1093-1108 (LLEK…KPSV) and 1159-1171 (KKCE…RGEE). Residue K1105 forms a Glycyl lysine isopeptide (Lys-Gly) (interchain with G-Cter in SUMO2) linkage. The residue at position 1107 (S1107) is a Phosphoserine. S1175 is subject to Phosphoserine.

This is G patch domain-containing protein 8 (GPATCH8) from Homo sapiens (Human).